Here is a 65-residue protein sequence, read N- to C-terminus: Large ribosomal subunit protein uL29 (65 aa).

This sequence belongs to the universal ribosomal protein uL29 family.

The chain is Large ribosomal subunit protein uL29 from Buchnera aphidicola subsp. Baizongia pistaciae (strain Bp).